Consider the following 118-residue polypeptide: Basic phospholipase A2 CM-II (118 aa).

7 cysteine pairs are disulfide-bonded: cysteine 11-cysteine 70, cysteine 26-cysteine 117, cysteine 28-cysteine 44, cysteine 43-cysteine 98, cysteine 50-cysteine 91, cysteine 59-cysteine 84, and cysteine 77-cysteine 89. Residues tyrosine 27, glycine 29, and glycine 31 each contribute to the Ca(2+) site. Histidine 47 is a catalytic residue. Aspartate 48 is a binding site for Ca(2+). Aspartate 92 is an active-site residue.

The protein belongs to the phospholipase A2 family. Group I subfamily. D49 sub-subfamily. Ca(2+) serves as cofactor. In terms of tissue distribution, expressed by the venom gland.

It is found in the secreted. It catalyses the reaction a 1,2-diacyl-sn-glycero-3-phosphocholine + H2O = a 1-acyl-sn-glycero-3-phosphocholine + a fatty acid + H(+). Its function is as follows. Snake venom phospholipase A2 (PLA2) that causes myonecrosis when injected intramuscularly, causes neuromuscular blockade with a gradual contracture and a decreased sensitivity to ACh and KCl (in the chick biventer cervicis nerve-muscle preparation), abolishes twitches evoked by indirect stimulation earlier than those by direct stimulation (in the mouse phrenic nerve-diaphragm preparation), shows indirect hemolytic activity, and shows weak anticoagulant activity. PLA2 catalyzes the calcium-dependent hydrolysis of the 2-acyl groups in 3-sn-phosphoglycerides. This is Basic phospholipase A2 CM-II from Naja mossambica (Mozambique spitting cobra).